Here is a 102-residue protein sequence, read N- to C-terminus: Feather keratin (102 aa).

An N-acetylserine modification is found at S1.

The protein belongs to the avian keratin family. In terms of assembly, the avian keratins (F-ker, S-ker, C-ker and B-ker) are a complex mixture of very similar polypeptides.

This Dromaius novaehollandiae (Emu) protein is Feather keratin.